A 781-amino-acid chain; its full sequence is Catalase-peroxidase (781 aa).

The signal sequence occupies residues Met-1–Ser-20. Residues Trp-125–Tyr-272 constitute a cross-link (tryptophyl-tyrosyl-methioninium (Trp-Tyr) (with M-298)). Catalysis depends on His-126, which acts as the Proton acceptor. A disordered region spans residues Val-237 to Ser-256. A cross-link (tryptophyl-tyrosyl-methioninium (Tyr-Met) (with W-125)) is located at residues Tyr-272–Met-298. His-313 is a binding site for heme b. The tract at residues Lys-317–Leu-336 is disordered.

This sequence belongs to the peroxidase family. Peroxidase/catalase subfamily. In terms of assembly, homodimer or homotetramer. It depends on heme b as a cofactor. Formation of the three residue Trp-Tyr-Met cross-link is important for the catalase, but not the peroxidase activity of the enzyme.

The enzyme catalyses H2O2 + AH2 = A + 2 H2O. It carries out the reaction 2 H2O2 = O2 + 2 H2O. Its function is as follows. Bifunctional enzyme with both catalase and broad-spectrum peroxidase activity. This chain is Catalase-peroxidase, found in Xylella fastidiosa (strain 9a5c).